We begin with the raw amino-acid sequence, 93 residues long: Putative protein adenylyltransferase MJ0435 (93 aa).

The short motif at glycine 26–aspartate 40 is the GSX(10)DXD motif element. 3 residues coordinate Mg(2+): aspartate 38, aspartate 40, and aspartate 70.

The protein belongs to the MntA antitoxin family. Probably forms a complex with cognate toxin MJ0434. Mg(2+) serves as cofactor.

The enzyme catalyses L-tyrosyl-[protein] + ATP = O-(5'-adenylyl)-L-tyrosyl-[protein] + diphosphate. It carries out the reaction O-(5'-adenylyl)-L-tyrosyl-[protein] + ATP = O-[5'-(adenylyl-(5'-&gt;3')-adenylyl)]-L-tyrosyl-[protein] + diphosphate. In terms of biological role, probable antitoxin component of a putative type VII toxin-antitoxin (TA) system. Neutralizes cognate toxic MJ0434 by di-AMPylation. The chain is Putative protein adenylyltransferase MJ0435 from Methanocaldococcus jannaschii (strain ATCC 43067 / DSM 2661 / JAL-1 / JCM 10045 / NBRC 100440) (Methanococcus jannaschii).